Reading from the N-terminus, the 269-residue chain is Hydroxyethylthiazole kinase (269 aa).

Residue Met45 participates in substrate binding. Residues Arg121 and Thr167 each coordinate ATP. A substrate-binding site is contributed by Gly194.

It belongs to the Thz kinase family. It depends on Mg(2+) as a cofactor.

The enzyme catalyses 5-(2-hydroxyethyl)-4-methylthiazole + ATP = 4-methyl-5-(2-phosphooxyethyl)-thiazole + ADP + H(+). It functions in the pathway cofactor biosynthesis; thiamine diphosphate biosynthesis; 4-methyl-5-(2-phosphoethyl)-thiazole from 5-(2-hydroxyethyl)-4-methylthiazole: step 1/1. Catalyzes the phosphorylation of the hydroxyl group of 4-methyl-5-beta-hydroxyethylthiazole (THZ). In Bacillus cytotoxicus (strain DSM 22905 / CIP 110041 / 391-98 / NVH 391-98), this protein is Hydroxyethylthiazole kinase.